A 2648-amino-acid chain; its full sequence is E3 ubiquitin-protein ligase hecd-1 (2648 aa).

ANK repeat units lie at residues 374–403 (VGQS…DVNK) and 405–434 (HKSS…NPDL). A compositionally biased stretch (basic and acidic residues) spans 433–455 (DLRDEDGKTALDKARERSDDDHN). 3 disordered regions span residues 433–494 (DLRD…ELPN), 645–714 (PMEI…KATA), and 1376–1400 (DPPK…ALPP). 3 stretches are compositionally biased toward polar residues: residues 478 to 489 (ASTSKQPGTSTK), 652 to 661 (NQPSSSTAVP), and 670 to 688 (TVPS…NPST). 2 stretches are compositionally biased toward low complexity: residues 696–714 (SSTP…KATA) and 1383–1400 (PAGT…ALPP). Positions 1438 to 1510 (RSRGSYKISE…NFDIERVTST (73 aa)) constitute an MIB/HERC2 domain. Disordered regions lie at residues 1538–1562 (YTPK…GSSR), 1575–1629 (KNTT…SLQH), 1652–1796 (NQEP…LLGG), and 1811–1836 (ESLS…GKKP). Composition is skewed to low complexity over residues 1543–1562 (TGGP…GSSR) and 1575–1586 (KNTTPAGTPSSG). Positions 1610–1629 (TSGPSVASTGQAASAESLQH) are enriched in polar residues. A compositionally biased stretch (acidic residues) spans 1653 to 1666 (QEPEDEPMGGEESD). Positions 1667–1696 (SAASMRSAASSNSQMSMGSSSQQQQQQDSD) are enriched in low complexity. 2 stretches are compositionally biased toward acidic residues: residues 1736 to 1746 (TDGDADADETN) and 1756 to 1783 (DAME…DESS). Low complexity predominate over residues 1812-1823 (SLSDASSSAKDA). The HECT domain maps to 2240-2648 (FHADRKAVLE…AINEKGFHLN (409 aa)). The active-site Glycyl thioester intermediate is the cysteine 2617.

Belongs to the UPL family. K-HECT subfamily. Expressed in most tissues, including hypodermis, muscle, intestine, vulva, and neurons.

It carries out the reaction S-ubiquitinyl-[E2 ubiquitin-conjugating enzyme]-L-cysteine + [acceptor protein]-L-lysine = [E2 ubiquitin-conjugating enzyme]-L-cysteine + N(6)-ubiquitinyl-[acceptor protein]-L-lysine.. The protein operates within protein modification; protein ubiquitination. In terms of biological role, E3 ubiquitin-protein ligase which accepts ubiquitin from an E2 ubiquitin-conjugating enzyme in the form of a thioester and then directly transfers the ubiquitin to targeted substrates. Involved in the ubiquitination and proteasomal-mediated degradation of cytoplasmic and mitochondrial proteins. Positively regulates lin-12 activity in the anchor cell (AC)/vulval precursor (VU) cell fate decision. Negatively regulates glp-1 activity in germline proliferation. May play a role in the formation of fibrous organelles, a hemidesmosome-like structure attaching muscles to the epidermis. Regulates germline DNA double-strand-break repair and apoptosis in response to DNA damage by recruiting E4 ubiquitin-protein ligase ufd-2 to DNA repair foci. In Caenorhabditis elegans, this protein is E3 ubiquitin-protein ligase hecd-1.